A 481-amino-acid polypeptide reads, in one-letter code: Trigger factor (481 aa).

The PPIase FKBP-type domain occupies G174–P261. The tract at residues E430–S481 is disordered. Basic and acidic residues predominate over residues K437 to K447. Residues K462 to T471 show a composition bias toward basic residues. The segment covering A472–S481 has biased composition (basic and acidic residues).

It belongs to the FKBP-type PPIase family. Tig subfamily.

It is found in the cytoplasm. It carries out the reaction [protein]-peptidylproline (omega=180) = [protein]-peptidylproline (omega=0). In terms of biological role, involved in protein export. Acts as a chaperone by maintaining the newly synthesized protein in an open conformation. Functions as a peptidyl-prolyl cis-trans isomerase. This Synechococcus sp. (strain WH7803) protein is Trigger factor.